A 241-amino-acid polypeptide reads, in one-letter code: Triosephosphate isomerase (241 aa).

9–11 (NWK) serves as a coordination point for substrate. The Electrophile role is filled by His-96. The active-site Proton acceptor is Glu-165. Substrate is bound by residues Gly-171, Ser-204, and 225-226 (GG).

This sequence belongs to the triosephosphate isomerase family. In terms of assembly, homodimer.

It localises to the cytoplasm. The catalysed reaction is D-glyceraldehyde 3-phosphate = dihydroxyacetone phosphate. It functions in the pathway carbohydrate biosynthesis; gluconeogenesis. It participates in carbohydrate degradation; glycolysis; D-glyceraldehyde 3-phosphate from glycerone phosphate: step 1/1. Its function is as follows. Involved in the gluconeogenesis. Catalyzes stereospecifically the conversion of dihydroxyacetone phosphate (DHAP) to D-glyceraldehyde-3-phosphate (G3P). The sequence is that of Triosephosphate isomerase from Trichormus variabilis (strain ATCC 29413 / PCC 7937) (Anabaena variabilis).